A 306-amino-acid polypeptide reads, in one-letter code: Type 3 secretion system translocon protein SctB (306 aa).

A helical membrane pass occupies residues 128–152 (LMIAMAVVSGIMAATSTVASAFSIA).

This sequence belongs to the SctB/YopD family. The core secretion machinery of the T3SS is composed of approximately 20 different proteins, including cytoplasmic components, a base, an export apparatus and a needle. This subunit is involved in the formation of a pore, called the translocon, in host membrane. Interacts with YopB/SctE and YopE. Together with YopB/SctE, forms a multimeric integral membrane complex with a mass of between 500 and 700 kDa. Interacts with its cognate chaperone SycD.

The protein resides in the secreted. Its subcellular location is the host membrane. Component of the type III secretion system (T3SS), also called injectisome, which is used to inject bacterial effector proteins into eukaryotic host cells. YopB/SctE and YopD/SctB are inserted into the host membrane where they form a pore and allow the translocation of effector proteins into the cytosol of target cells. In terms of biological role, involved in pathogenesis. Essential for the establishment of Yersinia infections in a mouse model system, but not for the targeting of effector Yops. May modulate the host's immune response at a distance from the site of infection. This chain is Type 3 secretion system translocon protein SctB, found in Yersinia enterocolitica.